The sequence spans 303 residues: Mevalonate kinase (303 aa).

90 to 100 (PAGSGLGSSAA) contributes to the ATP binding site. Aspartate 141 acts as the Proton acceptor in catalysis.

Belongs to the GHMP kinase family. Mevalonate kinase subfamily. Homodimer. The cofactor is Mg(2+).

The protein resides in the cytoplasm. The enzyme catalyses (R)-mevalonate + ATP = (R)-5-phosphomevalonate + ADP + H(+). It participates in isoprenoid biosynthesis; isopentenyl diphosphate biosynthesis via mevalonate pathway; isopentenyl diphosphate from (R)-mevalonate: step 1/3. Functionally, catalyzes the phosphorylation of (R)-mevalonate (MVA) to (R)-mevalonate 5-phosphate (MVAP). Functions in the mevalonate (MVA) pathway leading to isopentenyl diphosphate (IPP), a key precursor for the biosynthesis of isoprenoid compounds such as archaeal membrane lipids. This Methanothermobacter thermautotrophicus (strain ATCC 29096 / DSM 1053 / JCM 10044 / NBRC 100330 / Delta H) (Methanobacterium thermoautotrophicum) protein is Mevalonate kinase.